The sequence spans 669 residues: UvrABC system protein C (669 aa).

One can recognise a GIY-YIG domain in the interval 14-91; sequence DSPGCYLHKD…IQRYKPKYNI (78 aa). The UVR domain maps to 196–231; sequence KKIVKELEGKMISASDNMEFEQAAEYRDVIKAIGTL. The segment at 647-669 is disordered; sequence PHKSDENWESIKDNVPLLKSEKS. Residues 648-658 are compositionally biased toward basic and acidic residues; the sequence is HKSDENWESIK.

Belongs to the UvrC family. As to quaternary structure, interacts with UvrB in an incision complex.

Its subcellular location is the cytoplasm. In terms of biological role, the UvrABC repair system catalyzes the recognition and processing of DNA lesions. UvrC both incises the 5' and 3' sides of the lesion. The N-terminal half is responsible for the 3' incision and the C-terminal half is responsible for the 5' incision. The protein is UvrABC system protein C of Lactococcus lactis subsp. cremoris (strain MG1363).